A 634-amino-acid chain; its full sequence is MKLAMRRASTFALLALSWSAAVSAASSAGDYFVRSLPGAPPGPLVKMHAGHIEVSPEKNGNLFFWHFQNKHIANRQRTVIWLNGGPGCSSEDGALMEVGPYRLKDDHTLVPNEGSWHEFANLMFVDNPVGTGFSYVNTDSYVTELDEMADQFVIFLEKFFELFPEYSQDDIYIAGESFAGQHIPYIAKHILDRNKNSMTKIKWNLKGLLIGNGWIAPNEQYRAYLDFSYSKGLLDKNSETAKTLEAQHKDCAKEWEDNGPKVDVAKCESVLQTLLKLSSKVEADGKRHCVNMYDVRLRDTYPSCGMNWPPDLVNVTPYLRRKDVVEALHVNPNKATGWTECTGAVGQSFKAQKSKPSIDLLPKILEEVPILLFSGAEDLICNHIGTEAFIGKMTWNGGKGFEVTPGTWAPRRDWTFEGKDAGFWQEARNLTYVLFKDSSHMVPFDFPRRSRDMLDRFMGVDISSIGGNPTDSRLDGEKLPETTVGGAAGNSTSKQEEEKKKLDEAKWYAYRKSGEVVLVIVAVAAVAWGWYVWRDRRRRRGYQGIFGGSPSESTTRLPGLGSRISSTPSGLEGFRSKRQNGRDVEAGDFDESELDDLHTQTPTDARYSVGADSDDEEDASGSRKEGGPSGGRGR.

Residues 1 to 24 form the signal peptide; sequence MKLAMRRASTFALLALSWSAAVSA. Topologically, residues 25 to 512 are lumenal; it reads ASSAGDYFVR…DEAKWYAYRK (488 aa). Catalysis depends on residues Ser177 and Asp378. Asn429 is a glycosylation site (N-linked (GlcNAc...) asparagine). His440 is a catalytic residue. Positions 468–498 are disordered; it reads NPTDSRLDGEKLPETTVGGAAGNSTSKQEEE. The N-linked (GlcNAc...) asparagine glycan is linked to Asn490. A helical membrane pass occupies residues 513 to 533; that stretch reads SGEVVLVIVAVAAVAWGWYVW. The Cytoplasmic segment spans residues 534–634; it reads RDRRRRRGYQ…EGGPSGGRGR (101 aa). The tract at residues 542–634 is disordered; it reads YQGIFGGSPS…EGGPSGGRGR (93 aa).

It belongs to the peptidase S10 family.

It localises to the golgi apparatus. The protein resides in the trans-Golgi network membrane. It catalyses the reaction Preferential release of a C-terminal arginine or lysine residue.. Its function is as follows. Protease with a carboxypeptidase B-like function involved in the C-terminal processing of the lysine and arginine residues from protein precursors. Promotes cell fusion and is involved in the programmed cell death. The polypeptide is Pheromone-processing carboxypeptidase KEX1 (KEX1) (Pyricularia oryzae (strain 70-15 / ATCC MYA-4617 / FGSC 8958) (Rice blast fungus)).